Consider the following 386-residue polypeptide: Agamous-like MADS-box protein AGL30 (386 aa).

An MADS-box domain is found at 1-53; it reads MGRVKLKIKKLENTNGRQSTFAKRKNGILKKANELSILCDIDIVLLMFSPTGK. Positions 341-360 are disordered; that stretch reads PDSSAYNDNTNQTRFGSSSS. Polar residues predominate over residues 344-356; the sequence is SAYNDNTNQTRFG.

In terms of assembly, forms heterodimers with AGL66 and AGL104. Expressed in pollen.

It is found in the nucleus. Its function is as follows. Probable transcription factor that forms heterodimers with the MADS-box proteins AGL66 and AGL104 and is involved in the regulation of pollen maturation at the late stages of pollen development and pollen tube growth. The protein is Agamous-like MADS-box protein AGL30 of Arabidopsis thaliana (Mouse-ear cress).